A 242-amino-acid polypeptide reads, in one-letter code: tRNA pseudouridine synthase A (242 aa).

Asp51 functions as the Nucleophile in the catalytic mechanism. Residue Tyr107 participates in substrate binding.

Belongs to the tRNA pseudouridine synthase TruA family. As to quaternary structure, homodimer.

It carries out the reaction uridine(38/39/40) in tRNA = pseudouridine(38/39/40) in tRNA. Its function is as follows. Formation of pseudouridine at positions 38, 39 and 40 in the anticodon stem and loop of transfer RNAs. This chain is tRNA pseudouridine synthase A, found in Helicobacter pylori (strain J99 / ATCC 700824) (Campylobacter pylori J99).